The chain runs to 342 residues: Type II restriction enzyme CviAII (342 aa).

The enzyme catalyses Endonucleolytic cleavage of DNA to give specific double-stranded fragments with terminal 5'-phosphates.. In terms of biological role, a P subtype restriction enzyme that recognizes the double-stranded sequence 5'-CATG-3' and cleaves after C-1. This chain is Type II restriction enzyme CviAII (CVIAIIR), found in Chlorella (PBCV-1).